Consider the following 394-residue polypeptide: Elongation factor Tu 2 (394 aa).

Residues Lys-10–Glu-204 form the tr-type G domain. The segment at Gly-19–Thr-26 is G1. Gly-19 to Thr-26 is a GTP binding site. A Mg(2+)-binding site is contributed by Thr-26. Residues Gly-60–Ser-64 form a G2 region. Residues Asp-81–Gly-84 form a G3 region. GTP-binding positions include Asp-81–His-85 and Asn-136–Asp-139. Residues Asn-136 to Asp-139 are G4. Residues Ser-174–Leu-176 form a G5 region.

This sequence belongs to the TRAFAC class translation factor GTPase superfamily. Classic translation factor GTPase family. EF-Tu/EF-1A subfamily. As to quaternary structure, monomer.

The protein localises to the cytoplasm. The catalysed reaction is GTP + H2O = GDP + phosphate + H(+). Functionally, GTP hydrolase that promotes the GTP-dependent binding of aminoacyl-tRNA to the A-site of ribosomes during protein biosynthesis. This Photorhabdus laumondii subsp. laumondii (strain DSM 15139 / CIP 105565 / TT01) (Photorhabdus luminescens subsp. laumondii) protein is Elongation factor Tu 2.